Reading from the N-terminus, the 623-residue chain is Glutathione import ATP-binding protein GsiA (623 aa).

2 consecutive ABC transporter domains span residues 15 to 269 (VSGL…QTLL) and 325 to 564 (LRSG…RKLM). ATP-binding positions include 49–56 (GESGSGKS) and 357–364 (GESGSGKS).

Belongs to the ABC transporter superfamily. Glutathione importer (TC 3.A.1.5.11) family. In terms of assembly, the complex is composed of two ATP-binding proteins (GsiA), two transmembrane proteins (GsiC and GsiD) and a solute-binding protein (GsiB).

It localises to the cell inner membrane. It catalyses the reaction glutathione(out) + ATP + H2O = glutathione(in) + ADP + phosphate + H(+). Part of the ABC transporter complex GsiABCD involved in glutathione import. Responsible for energy coupling to the transport system. This chain is Glutathione import ATP-binding protein GsiA, found in Salmonella typhimurium (strain LT2 / SGSC1412 / ATCC 700720).